Consider the following 297-residue polypeptide: Acetaldehyde dehydrogenase (297 aa).

15-18 provides a ligand contact to NAD(+); that stretch reads SGSI. Catalysis depends on cysteine 130, which acts as the Acyl-thioester intermediate. NAD(+)-binding positions include 162 to 170 and asparagine 272; that span reads SAGIATREN.

This sequence belongs to the acetaldehyde dehydrogenase family.

The enzyme catalyses acetaldehyde + NAD(+) + CoA = acetyl-CoA + NADH + H(+). This is Acetaldehyde dehydrogenase (mhpF) from Burkholderia pseudomallei (strain K96243).